The following is a 348-amino-acid chain: L-asparaginase 2 (348 aa).

The first 22 residues, 1 to 22 (MEFFKKTALAALVMGFSGAALA), serve as a signal peptide directing secretion. Residues 24 to 348 (PNITILATGG…QQIQQIFNQY (325 aa)) form the Asparaginase/glutaminase domain. Threonine 34 functions as the O-isoaspartyl threonine intermediate in the catalytic mechanism. Substrate is bound by residues 80–81 (SQ) and 111–112 (TD). The cysteines at positions 99 and 127 are disulfide-linked.

This sequence belongs to the asparaginase 1 family. In terms of assembly, homotetramer.

The protein localises to the periplasm. The catalysed reaction is L-asparagine + H2O = L-aspartate + NH4(+). The sequence is that of L-asparaginase 2 (ansB) from Escherichia coli (strain K12).